Here is a 189-residue protein sequence, read N- to C-terminus: CDP-archaeol synthase (189 aa).

The next 5 helical transmembrane spans lie at 6–26, 71–91, 96–116, 125–145, and 162–184; these read VAIAVWAMLPAYVPNNVAVLA, GVVLALLLNQLQPFVAGTVGV, IAAAVALAFGAMLGDILASFL, GAAFPGVDQLDFVIVSLALTA, and VAIFVLTPVLHVSTNGLAYAFGL.

Belongs to the CDP-archaeol synthase family. Requires Mg(2+) as cofactor.

It is found in the cell membrane. It catalyses the reaction 2,3-bis-O-(geranylgeranyl)-sn-glycerol 1-phosphate + CTP + H(+) = CDP-2,3-bis-O-(geranylgeranyl)-sn-glycerol + diphosphate. It participates in membrane lipid metabolism; glycerophospholipid metabolism. Catalyzes the formation of CDP-2,3-bis-(O-geranylgeranyl)-sn-glycerol (CDP-archaeol) from 2,3-bis-(O-geranylgeranyl)-sn-glycerol 1-phosphate (DGGGP) and CTP. This reaction is the third ether-bond-formation step in the biosynthesis of archaeal membrane lipids. This chain is CDP-archaeol synthase, found in Natronomonas pharaonis (strain ATCC 35678 / DSM 2160 / CIP 103997 / JCM 8858 / NBRC 14720 / NCIMB 2260 / Gabara) (Halobacterium pharaonis).